Consider the following 430-residue polypeptide: Serine--tRNA ligase (430 aa).

An L-serine-binding site is contributed by 237 to 239; it reads TAE. Residue 268-270 participates in ATP binding; sequence RAE. Glu291 is a binding site for L-serine. 355-358 contributes to the ATP binding site; sequence EVSS. Ser391 provides a ligand contact to L-serine.

This sequence belongs to the class-II aminoacyl-tRNA synthetase family. Type-1 seryl-tRNA synthetase subfamily. In terms of assembly, homodimer. The tRNA molecule binds across the dimer.

The protein localises to the cytoplasm. The enzyme catalyses tRNA(Ser) + L-serine + ATP = L-seryl-tRNA(Ser) + AMP + diphosphate + H(+). The catalysed reaction is tRNA(Sec) + L-serine + ATP = L-seryl-tRNA(Sec) + AMP + diphosphate + H(+). Its pathway is aminoacyl-tRNA biosynthesis; selenocysteinyl-tRNA(Sec) biosynthesis; L-seryl-tRNA(Sec) from L-serine and tRNA(Sec): step 1/1. Functionally, catalyzes the attachment of serine to tRNA(Ser). Is also able to aminoacylate tRNA(Sec) with serine, to form the misacylated tRNA L-seryl-tRNA(Sec), which will be further converted into selenocysteinyl-tRNA(Sec). This Baumannia cicadellinicola subsp. Homalodisca coagulata protein is Serine--tRNA ligase.